Here is a 546-residue protein sequence, read N- to C-terminus: Choline oxidase (546 aa).

FAD-binding positions include 23-24, Glu44, Trp71, 90-92, 96-103, Ala232, and Tyr465; these read SA, AKV, and CSSHNSCI. His99 carries the post-translational modification Tele-8alpha-FAD histidine. The active-site Proton acceptor is His466. FAD-binding positions include Ala500 and 510-512; that span reads NPN.

This sequence belongs to the GMC oxidoreductase family. As to quaternary structure, homodimer. It depends on FAD as a cofactor.

The catalysed reaction is choline + 2 O2 + H2O = glycine betaine + 2 H2O2 + H(+). Its pathway is amine and polyamine biosynthesis; betaine biosynthesis via choline pathway; betaine from choline: step 1/1. Its function is as follows. Catalyzes the two-step oxidative conversion of choline to glycine-betaine with betaine aldehyde as an intermediate. Glycine-betaine accumulates to high levels in the cytoplasm of cells to prevent dehydration and plasmolysis in adverse hyperosmotic environments. Accepts either choline or the reaction intermediate betaine-aldehyde as substrate. The polypeptide is Choline oxidase (codA) (Arthrobacter globiformis).